We begin with the raw amino-acid sequence, 269 residues long: Monofunctional glycosyltransferase (269 aa).

Residues 46 to 66 (ILLTILIIIALFIGIMYFLST) form a helical membrane-spanning segment.

It belongs to the glycosyltransferase 51 family.

Its subcellular location is the cell membrane. The catalysed reaction is [GlcNAc-(1-&gt;4)-Mur2Ac(oyl-L-Ala-gamma-D-Glu-L-Lys-D-Ala-D-Ala)](n)-di-trans,octa-cis-undecaprenyl diphosphate + beta-D-GlcNAc-(1-&gt;4)-Mur2Ac(oyl-L-Ala-gamma-D-Glu-L-Lys-D-Ala-D-Ala)-di-trans,octa-cis-undecaprenyl diphosphate = [GlcNAc-(1-&gt;4)-Mur2Ac(oyl-L-Ala-gamma-D-Glu-L-Lys-D-Ala-D-Ala)](n+1)-di-trans,octa-cis-undecaprenyl diphosphate + di-trans,octa-cis-undecaprenyl diphosphate + H(+). It participates in cell wall biogenesis; peptidoglycan biosynthesis. In terms of biological role, peptidoglycan polymerase that catalyzes glycan chain elongation using lipid-linked disaccharide-pentapeptide as the substrate. This chain is Monofunctional glycosyltransferase, found in Staphylococcus aureus (strain JH1).